A 96-amino-acid chain; its full sequence is UPF0213 protein Lreu_0682 (96 aa).

Residues Glu-4–Lys-81 form the GIY-YIG domain.

This sequence belongs to the UPF0213 family.

The polypeptide is UPF0213 protein Lreu_0682 (Limosilactobacillus reuteri (strain DSM 20016) (Lactobacillus reuteri)).